The sequence spans 329 residues: Probable cell division protein WhiA (329 aa).

Positions 275–308 (SLEELGALADPPLTKDAVAGRIRRLLAMADKRAQ) form a DNA-binding region, H-T-H motif.

This sequence belongs to the WhiA family.

Involved in cell division and chromosome segregation. The protein is Probable cell division protein WhiA of Streptomyces griseus subsp. griseus (strain JCM 4626 / CBS 651.72 / NBRC 13350 / KCC S-0626 / ISP 5235).